The chain runs to 444 residues: Glutamate--tRNA ligase 1 (444 aa).

The short motif at 10–20 (PSPTGRLHLGN) is the 'HIGH' region element. Residues 241 to 245 (GLSKR) carry the 'KMSKS' region motif. Lys-244 contributes to the ATP binding site.

This sequence belongs to the class-I aminoacyl-tRNA synthetase family. Glutamate--tRNA ligase type 1 subfamily. Monomer.

The protein resides in the cytoplasm. It carries out the reaction tRNA(Glu) + L-glutamate + ATP = L-glutamyl-tRNA(Glu) + AMP + diphosphate. Catalyzes the attachment of glutamate to tRNA(Glu) in a two-step reaction: glutamate is first activated by ATP to form Glu-AMP and then transferred to the acceptor end of tRNA(Glu). This Rhodospirillum rubrum (strain ATCC 11170 / ATH 1.1.1 / DSM 467 / LMG 4362 / NCIMB 8255 / S1) protein is Glutamate--tRNA ligase 1.